Reading from the N-terminus, the 309-residue chain is UDP-3-O-acyl-N-acetylglucosamine deacetylase (309 aa).

Residues H78, H237, and D241 each contribute to the Zn(2+) site. The active-site Proton donor is the H264.

This sequence belongs to the LpxC family. It depends on Zn(2+) as a cofactor.

It catalyses the reaction a UDP-3-O-[(3R)-3-hydroxyacyl]-N-acetyl-alpha-D-glucosamine + H2O = a UDP-3-O-[(3R)-3-hydroxyacyl]-alpha-D-glucosamine + acetate. The protein operates within glycolipid biosynthesis; lipid IV(A) biosynthesis; lipid IV(A) from (3R)-3-hydroxytetradecanoyl-[acyl-carrier-protein] and UDP-N-acetyl-alpha-D-glucosamine: step 2/6. In terms of biological role, catalyzes the hydrolysis of UDP-3-O-myristoyl-N-acetylglucosamine to form UDP-3-O-myristoylglucosamine and acetate, the committed step in lipid A biosynthesis. The chain is UDP-3-O-acyl-N-acetylglucosamine deacetylase from Methylobacillus flagellatus (strain ATCC 51484 / DSM 6875 / VKM B-1610 / KT).